Consider the following 371-residue polypeptide: Dual-specificity RNA methyltransferase RlmN (371 aa).

The active-site Proton acceptor is Glu114. The 233-residue stretch at 120–352 folds into the Radical SAM core domain; that stretch reads EEDHFTLCVS…VMTRQSKGAD (233 aa). Residues Cys127 and Cys357 are joined by a disulfide bond. Cys134, Cys138, and Cys141 together coordinate [4Fe-4S] cluster. S-adenosyl-L-methionine-binding positions include 183–184, Ser216, 238–240, and Asn314; these read GE and SLN. The S-methylcysteine intermediate role is filled by Cys357.

This sequence belongs to the radical SAM superfamily. RlmN family. [4Fe-4S] cluster is required as a cofactor.

The protein localises to the cytoplasm. It catalyses the reaction adenosine(2503) in 23S rRNA + 2 reduced [2Fe-2S]-[ferredoxin] + 2 S-adenosyl-L-methionine = 2-methyladenosine(2503) in 23S rRNA + 5'-deoxyadenosine + L-methionine + 2 oxidized [2Fe-2S]-[ferredoxin] + S-adenosyl-L-homocysteine. It carries out the reaction adenosine(37) in tRNA + 2 reduced [2Fe-2S]-[ferredoxin] + 2 S-adenosyl-L-methionine = 2-methyladenosine(37) in tRNA + 5'-deoxyadenosine + L-methionine + 2 oxidized [2Fe-2S]-[ferredoxin] + S-adenosyl-L-homocysteine. Its function is as follows. Specifically methylates position 2 of adenine 2503 in 23S rRNA and position 2 of adenine 37 in tRNAs. m2A2503 modification seems to play a crucial role in the proofreading step occurring at the peptidyl transferase center and thus would serve to optimize ribosomal fidelity. The sequence is that of Dual-specificity RNA methyltransferase RlmN from Desulfosudis oleivorans (strain DSM 6200 / JCM 39069 / Hxd3) (Desulfococcus oleovorans).